Reading from the N-terminus, the 495-residue chain is MAKNNAVAGFNALNGVELNLFTTDELKAIHYATMEVLMDPGIQVSDPEARQIFKENGCEVNEKTNVVKIPEYLVRKALQLAPSRFVLWGRDKKFNTVQECGGKVHWTCFGTGVKVCKYQDGKYVTVDSVEKDIADIAKLCDWAENIDYFSLPVSARDIAGQGAQDVHETLTPLANTAKHFHHIDPVGENVEYYRDIVKAYYGGDEEEARKKPIFSMLLCPTSPLELSVNACQVIIKGARFGIPVNVLSMAMSGGSSPVYLAGTLVTHNAEVLSGIVLAQLTVPGAKVWYGSSTTTFDLKKGTAPVGSPELGLISAAVAKLAQFYGLPSYVAGSOSDAKVPDDQAGHEKTMTTLLPALAGANTIYGAGMLELGMTFSMEQLVIDNDIFSMVKKAMQGIPVSEETLAVESIQKVGIGNNFLALKQTRQLVDYPSNPMLLDRHMFGDWAAAGSKDLATVAHEKVEDVLKNHQVTPIDADIFKDMQAIVDKADKAFRGM.

Residue Pyl334 is a non-standard amino acid, pyrrolysine.

Belongs to the trimethylamine methyltransferase family. In terms of assembly, can form a complex with MttC.

It catalyses the reaction Co(I)-[trimethylamine-specific corrinoid protein] + trimethylamine + H(+) = methyl-Co(III)-[trimethylamine-specific corrinoid protein] + dimethylamine. It participates in one-carbon metabolism; methanogenesis from trimethylamine. In terms of biological role, catalyzes the transfer of a methyl group from trimethylamine to the corrinoid cofactor of MttC. The polypeptide is Trimethylamine methyltransferase MttB (Methanosarcina barkeri).